The primary structure comprises 226 residues: ATP synthase subunit a (226 aa).

5 consecutive transmembrane segments (helical) span residues leucine 18 to leucine 38, phenylalanine 74 to phenylalanine 94, leucine 100 to isoleucine 120, leucine 158 to glycine 180, and isoleucine 197 to leucine 217.

It belongs to the ATPase A chain family. In terms of assembly, F-type ATPases have 2 components, CF(1) - the catalytic core - and CF(0) - the membrane proton channel. CF(1) has five subunits: alpha(3), beta(3), gamma(1), delta(1), epsilon(1). CF(0) has three main subunits: a, b and c.

Its subcellular location is the mitochondrion inner membrane. Mitochondrial membrane ATP synthase (F(1)F(0) ATP synthase or Complex V) produces ATP from ADP in the presence of a proton gradient across the membrane which is generated by electron transport complexes of the respiratory chain. F-type ATPases consist of two structural domains, F(1) - containing the extramembraneous catalytic core and F(0) - containing the membrane proton channel, linked together by a central stalk and a peripheral stalk. During catalysis, ATP synthesis in the catalytic domain of F(1) is coupled via a rotary mechanism of the central stalk subunits to proton translocation. Key component of the proton channel; it may play a direct role in the translocation of protons across the membrane. The protein is ATP synthase subunit a (mt:ATPase6) of Anopheles gambiae (African malaria mosquito).